The following is a 156-amino-acid chain: uncharacterized protein (156 aa).

This is an uncharacterized protein from Saccharomyces cerevisiae (strain ATCC 204508 / S288c) (Baker's yeast).